We begin with the raw amino-acid sequence, 130 residues long: Small ribosomal subunit protein uS9 (130 aa).

Residues 106-130 (RDSRKVERKKPGLKKARKASQFSKR) form a disordered region. Residues 111 to 130 (VERKKPGLKKARKASQFSKR) are compositionally biased toward basic residues.

Belongs to the universal ribosomal protein uS9 family.

The polypeptide is Small ribosomal subunit protein uS9 (Streptococcus pneumoniae (strain ATCC 700669 / Spain 23F-1)).